The following is a 413-amino-acid chain: Histidinol-phosphate aminotransferase, chloroplastic (413 aa).

The transit peptide at 1 to 35 (MGVIELCNTSSICIGRAKPSCCSIERNQRRRIICM) directs the protein to the chloroplast. K273 carries the N6-(pyridoxal phosphate)lysine modification.

This sequence belongs to the class-II pyridoxal-phosphate-dependent aminotransferase family. Histidinol-phosphate aminotransferase subfamily. In terms of assembly, homodimer. Pyridoxal 5'-phosphate is required as a cofactor. As to expression, mainly expressed in green tissues.

It is found in the plastid. The protein resides in the chloroplast. The catalysed reaction is L-histidinol phosphate + 2-oxoglutarate = 3-(imidazol-4-yl)-2-oxopropyl phosphate + L-glutamate. The protein operates within amino-acid biosynthesis; L-histidine biosynthesis; L-histidine from 5-phospho-alpha-D-ribose 1-diphosphate: step 7/9. In Nicotiana tabacum (Common tobacco), this protein is Histidinol-phosphate aminotransferase, chloroplastic (HPA).